Here is a 458-residue protein sequence, read N- to C-terminus: tRNA modification GTPase MnmE (458 aa).

(6S)-5-formyl-5,6,7,8-tetrahydrofolate contacts are provided by Arg-22, Glu-86, and Arg-125. One can recognise a TrmE-type G domain in the interval 221 to 379 (GIRTVILGRP…LEQTITEMFF (159 aa)). Residue Asn-231 participates in K(+) binding. GTP is bound by residues 231-236 (NAGKSS), 250-256 (TEIAGTT), and 275-278 (DTAG). Ser-235 lines the Mg(2+) pocket. K(+)-binding residues include Thr-250, Ile-252, and Thr-255. A Mg(2+)-binding site is contributed by Thr-256. Lys-458 serves as a coordination point for (6S)-5-formyl-5,6,7,8-tetrahydrofolate.

It belongs to the TRAFAC class TrmE-Era-EngA-EngB-Septin-like GTPase superfamily. TrmE GTPase family. In terms of assembly, homodimer. Heterotetramer of two MnmE and two MnmG subunits. Requires K(+) as cofactor.

Its subcellular location is the cytoplasm. In terms of biological role, exhibits a very high intrinsic GTPase hydrolysis rate. Involved in the addition of a carboxymethylaminomethyl (cmnm) group at the wobble position (U34) of certain tRNAs, forming tRNA-cmnm(5)s(2)U34. The chain is tRNA modification GTPase MnmE from Lachnoclostridium phytofermentans (strain ATCC 700394 / DSM 18823 / ISDg) (Clostridium phytofermentans).